A 427-amino-acid chain; its full sequence is Ribose-phosphate pyrophosphokinase 1 (427 aa).

Aspartate 128, histidine 130, and aspartate 143 together coordinate Mg(2+). Phosphoserine occurs at positions 199, 218, 271, and 295.

Belongs to the ribose-phosphate pyrophosphokinase family.

It is found in the cytoplasm. The catalysed reaction is D-ribose 5-phosphate + ATP = 5-phospho-alpha-D-ribose 1-diphosphate + AMP + H(+). Its pathway is metabolic intermediate biosynthesis; 5-phospho-alpha-D-ribose 1-diphosphate biosynthesis; 5-phospho-alpha-D-ribose 1-diphosphate from D-ribose 5-phosphate (route I): step 1/1. 5-phosphoribose 1-diphosphate synthase involved in nucleotide, histidine, and tryptophan biosynthesis. Active in heteromultimeric complexes with other 5-phosphoribose 1-diphosphate synthases (PRS2, PRS3, PRS4 and PRS5). This chain is Ribose-phosphate pyrophosphokinase 1 (PRS1), found in Saccharomyces cerevisiae (strain ATCC 204508 / S288c) (Baker's yeast).